We begin with the raw amino-acid sequence, 304 residues long: Glycine--tRNA ligase alpha subunit (304 aa).

The protein belongs to the class-II aminoacyl-tRNA synthetase family. As to quaternary structure, tetramer of two alpha and two beta subunits.

The protein localises to the cytoplasm. It catalyses the reaction tRNA(Gly) + glycine + ATP = glycyl-tRNA(Gly) + AMP + diphosphate. In Pectobacterium atrosepticum (strain SCRI 1043 / ATCC BAA-672) (Erwinia carotovora subsp. atroseptica), this protein is Glycine--tRNA ligase alpha subunit.